A 1210-amino-acid chain; its full sequence is MRPSGTARTTLLVLLTALCAAGGALEEKKVCQGTSNRLTQLGTFEDHFLSLQRMYNNCEVVLGNLEITYVQRNYDLSFLKTIQEVAGYVLIALNTVERIPLENLQIIRGNALYENTYALAILSNYGTNRTGLRELPMRNLQEILIGAVRFSNNPILCNMDTIQWRDIVQNVFMSNMSMDLQSHPSSCPKCDPSCPNGSCWGGGEENCQKLTKIICAQQCSHRCRGRSPSDCCHNQCAAGCTGPRESDCLVCQKFQDEATCKDTCPPLMLYNPTTYQMDVNPEGKYSFGATCVKKCPRNYVVTDHGSCVRACGPDYYEVEEDGIRKCKKCDGPCRKVCNGIGIGEFKDTLSINATNIKHFKYCTAISGDLHILPVAFKGDSFTRTPPLDPRELEILKTVKEITGFLLIQAWPDNWTDLHAFENLEIIRGRTKQHGQFSLAVVGLNITSLGLRSLKEISDGDVIISGNRNLCYANTINWKKLFGTPNQKTKIMNNRAEKDCKAVNHVCNPLCSSEGCWGPEPRDCVSCQNVSRGRECVEKCNILEGEPREFVENSECIQCHPECLPQAMNITCTGRGPDNCIQCAHYIDGPHCVKTCPAGIMGENNTLVWKYADANNVCHLCHANCTYGCAGPGLQGCEVWPSGPKIPSIATGIVGGLLFIVVVALGIGLFMRRRHIVRKRTLRRLLQERELVEPLTPSGEAPNQAHLRILKETEFKKIKVLGSGAFGTVYKGLWIPEGEKVKIPVAIKELREATSPKANKEILDEAYVMASVDNPHVCRLLGICLTSTVQLITQLMPYGCLLDYVREHKDNIGSQYLLNWCVQIAKGMNYLEDRRLVHRDLAARNVLVKTPQHVKITDFGLAKLLGAEEKEYHAEGGKVPIKWMALESILHRIYTHQSDVWSYGVTVWELMTFGSKPYDGIPASDISSILEKGERLPQPPICTIDVYMIMVKCWMIDADSRPKFRELILEFSKMARDPQRYLVIQGDERMHLPSPTDSNFYRALMDEEDMEDVVDADEYLIPQQGFFNSPSTSRTPLLSSLSATSNNSTVACINRNGSCRVKEDAFLQRYSSDPTGAVTEDNIDDAFLPVPEYVNQSVPKRPAGSVQNPVYHNQPLHPAPGRDLHYQNPHSNAVGNPEYLNTAQPTCLSSGFNSPALWIQKGSHQMSLDNPDYQQDFFPKETKPNGIFKGPTAENAEYLRVAPPSSEFIGA.

The first 24 residues, 1 to 24 (MRPSGTARTTLLVLLTALCAAGGA), serve as a signal peptide directing secretion. Over 25–647 (LEEKKVCQGT…VWPSGPKIPS (623 aa)) the chain is Extracellular. An intrachain disulfide couples C31 to C58. One copy of the Approximate repeat lies at 75–300 (DLSFLKTIQE…CVKKCPRNYV (226 aa)). 3 N-linked (GlcNAc...) asparagine glycosylation sites follow: N128, N175, and N196. 13 cysteine pairs are disulfide-bonded: C157/C187, C190/C199, C194/C207, C215/C223, C219/C231, C232/C240, C236/C248, C251/C260, C264/C291, C295/C307, C311/C326, C329/C333, and C337/C362. S229 bears the Phosphoserine mark. N352, N413, and N444 each carry an N-linked (GlcNAc...) asparagine glycan. An Approximate repeat occupies 390 to 600 (RELEILKTVK…CVKTCPAGIM (211 aa)). 11 disulfide bridges follow: C470–C499, C506–C515, C510–C523, C526–C535, C539–C555, C558–C571, C562–C579, C582–C591, C595–C617, C620–C628, and C624–C636. N-linked (GlcNAc...) asparagine glycosylation occurs at N528. N568 carries an N-linked (GlcNAc...) asparagine glycan. Residues N603 and N623 are each glycosylated (N-linked (GlcNAc...) asparagine). A helical transmembrane segment spans residues 648-670 (IATGIVGGLLFIVVVALGIGLFM). Over 671 to 1210 (RRRHIVRKRT…APPSSEFIGA (540 aa)) the chain is Cytoplasmic. T680 is modified (phosphothreonine; by PKC and PKD/PRKD1). Positions 690–706 (LVEPLTPSGEAPNQAHL) are important for dimerization, phosphorylation and activation. Residue T695 is modified to Phosphothreonine; by PKD/PRKD1. S697 is subject to Phosphoserine. A Protein kinase domain is found at 714–981 (FKKIKVLGSG…KMARDPQRYL (268 aa)). K718 participates in a covalent cross-link: Glycyl lysine isopeptide (Lys-Gly) (interchain with G-Cter in ubiquitin). 720-728 (LGSGAFGTV) is an ATP binding site. K739 is covalently cross-linked (Glycyl lysine isopeptide (Lys-Gly) (interchain with G-Cter in ubiquitin)). K747 lines the ATP pocket. K747 carries the N6-(2-hydroxyisobutyryl)lysine modification. Glycyl lysine isopeptide (Lys-Gly) (interchain with G-Cter in ubiquitin) cross-links involve residues K756 and K759. An ATP-binding site is contributed by 792–793 (TQ). The active-site Proton acceptor is the D839. D857 serves as a coordination point for ATP. Residue K869 forms a Glycyl lysine isopeptide (Lys-Gly) (interchain with G-Cter in ubiquitin) linkage. The residue at position 871 (Y871) is a Phosphotyrosine. Glycyl lysine isopeptide (Lys-Gly) (interchain with G-Cter in ubiquitin) cross-links involve residues K931, K962, and K972. 2 positions are modified to phosphoserine: S993 and S997. Y1000 and Y1018 each carry phosphotyrosine; by autocatalysis. Phosphoserine is present on residues S1028 and S1041. The residue at position 1043 (T1043) is a Phosphothreonine. The residue at position 1044 (S1044) is a Phosphoserine. C1051 carries S-palmitoyl cysteine lipidation. Phosphotyrosine is present on Y1069. A phosphoserine mark is found at S1070 and S1071. 2 positions are modified to phosphotyrosine; by autocatalysis: Y1092 and Y1110. The segment at 1113–1137 (QPLHPAPGRDLHYQNPHSNAVGNPE) is disordered. Over residues 1127–1137 (NPHSNAVGNPE) the composition is skewed to polar residues. C1146 carries the S-palmitoyl cysteine lipid modification. Phosphoserine is present on S1166. Y1172 bears the Phosphotyrosine; by autocatalysis mark. A Phosphotyrosine modification is found at Y1197. R1199 bears the Omega-N-methylarginine mark.

The protein belongs to the protein kinase superfamily. Tyr protein kinase family. EGF receptor subfamily. As to quaternary structure, binding of the ligand triggers homo- and/or heterodimerization of the receptor triggering its autophosphorylation. Heterodimer with ERBB2. Forms a complex with CCDC88A/GIV (via SH2-like region) and GNAI3 which leads to enhanced EGFR signaling and triggering of cell migration; binding of CCDC88A requires autophosphorylation of the EGFR C-terminal region, and ligand stimulation is required for recruitment of GNAI3 to the complex. Interacts with ERRFI1; inhibits dimerization of the kinase domain and autophosphorylation. Part of a complex with ERBB2 and either PIK3C2A or PIK3C2B. Interacts with GRB2; an adapter protein coupling the receptor to downstream signaling pathways. Interacts with GAB2; involved in signaling downstream of EGFR. Interacts with STAT3; mediates EGFR downstream signaling in cell proliferation. Interacts with RIPK1; involved in NF-kappa-B activation. Interacts (autophosphorylated) with CBL, CBLB and CBLC; involved in EGFR ubiquitination and regulation; interaction with CBL is reduced in the presence of tensin TNS4. Interacts with SOCS5; regulates EGFR degradation through ELOC- and ELOB-mediated ubiquitination and proteasomal degradation. Interacts with PRMT5; methylates EGFR and enhances interaction with PTPN6. Interacts (phosphorylated) with PTPN6; inhibits EGFR-dependent activation of MAPK/ERK. Interacts with COPG1; essential for regulation of EGF-dependent nuclear transport of EGFR by retrograde trafficking from the Golgi to the ER. Interacts with TNK2; this interaction is dependent on EGF stimulation and kinase activity of EGFR. Interacts with PCNA; positively regulates PCNA. Interacts with PELP1. Interacts with MUC1. Interacts with AP2M1. Interacts with FER. Interacts (via SH2 domains) with GRB2, NCK1 and NCK2. Interacts with EPS8; mediates EPS8 phosphorylation. Interacts with ATXN2. Interacts with GAREM1. Interacts (ubiquitinated) with ANKRD13A/B/D; the interaction is direct and may regulate EGFR internalization after EGF stimulation. Interacts with GPER1; the interaction occurs in an estrogen-dependent manner. Interacts (via C-terminal cytoplasmic kinase domain) with ZPR1 (via zinc fingers). Interacts with RNF115 and RNF126. Interacts with GPRC5A (via its transmembrane domain). Interacts with FAM83B; positively regulates EGFR inducing its autophosphorylation in absence of stimulation by EGF. Interacts with LAPTM4B; positively correlates with EGFR activation. Interacts with STX19. Interacts with CD44. Interacts with PGRMC1; the interaction requires PGRMC1 homodimerization. Interacts with PIKFYVE. Interacts with NEU3. Interacts with TRAF4. Interacts with the ant venom OMEGA-myrmeciitoxin(02)-Mg1a. Interacts with CD82; this interaction facilitates ligand-induced endocytosis of the receptor and its subsequent desensitization. Post-translationally, monoubiquitinated and polyubiquitinated upon EGF stimulation; which does not affect tyrosine kinase activity or signaling capacity but may play a role in lysosomal targeting. Polyubiquitin linkage is mainly through 'Lys-63', but linkage through 'Lys-48', 'Lys-11' and 'Lys-29' also occurs. Deubiquitinated by OTUD7B, preventing degradation. Ubiquitinated by RNF115 and RNF126. Ubiquitinated by ZNRF1 or CBL at different lysines in response to EGF stimulation; leading to recruitment of the ESCRT machinery and subsequent degradation in the lysosomes. Deubiquitinated by UCHL1 leading to the inhibition of its degradation. In terms of processing, phosphorylated on Tyr residues in response to EGF. Phosphorylation at Ser-697 is partial and occurs only if Thr-695 is phosphorylated. Phosphorylation at Thr-680 and Thr-695 by PRKD1 inhibits EGF-induced MAPK8/JNK1 activation. Dephosphorylation by PTPRJ prevents endocytosis and stabilizes the receptor at the plasma membrane. Autophosphorylation at Tyr-1199 is stimulated by methylation at Arg-1199 and enhances interaction with PTPN6. Autophosphorylation at Tyr-1092 and/or Tyr-1110 recruits STAT3. Dephosphorylated by PTPN1 and PTPN2. Palmitoylated on Cys residues by ZDHHC20. Palmitoylation inhibits internalization after ligand binding, and increases the persistence of tyrosine-phosphorylated EGFR at the cell membrane. Palmitoylation increases the amplitude and duration of EGFR signaling. Post-translationally, methylated. Methylation at Arg-1199 by PRMT5 stimulates phosphorylation at Tyr-1197.

It is found in the cell membrane. The protein localises to the endoplasmic reticulum membrane. The protein resides in the golgi apparatus membrane. It localises to the nucleus membrane. Its subcellular location is the endosome. It is found in the endosome membrane. The protein localises to the nucleus. It catalyses the reaction L-tyrosyl-[protein] + ATP = O-phospho-L-tyrosyl-[protein] + ADP + H(+). Its activity is regulated as follows. Endocytosis and inhibition of the activated EGFR by phosphatases like PTPRJ and PTPRK constitute immediate regulatory mechanisms. Upon EGF-binding phosphorylates EPS15 that regulates EGFR endocytosis and activity. Moreover, inducible feedback inhibitors including LRIG1, SOCS4, SOCS5 and ERRFI1 constitute alternative regulatory mechanisms for the EGFR signaling. Its function is as follows. Receptor tyrosine kinase binding ligands of the EGF family and activating several signaling cascades to convert extracellular cues into appropriate cellular responses. Known ligands include EGF, TGFA/TGF-alpha, AREG, epigen/EPGN, BTC/betacellulin, epiregulin/EREG and HBEGF/heparin-binding EGF. Ligand binding triggers receptor homo- and/or heterodimerization and autophosphorylation on key cytoplasmic residues. The phosphorylated receptor recruits adapter proteins like GRB2 which in turn activates complex downstream signaling cascades. Activates at least 4 major downstream signaling cascades including the RAS-RAF-MEK-ERK, PI3 kinase-AKT, PLCgamma-PKC and STATs modules. May also activate the NF-kappa-B signaling cascade. Also directly phosphorylates other proteins like RGS16, activating its GTPase activity and probably coupling the EGF receptor signaling to the G protein-coupled receptor signaling. Also phosphorylates MUC1 and increases its interaction with SRC and CTNNB1/beta-catenin. Positively regulates cell migration via interaction with CCDC88A/GIV which retains EGFR at the cell membrane following ligand stimulation, promoting EGFR signaling which triggers cell migration. Plays a role in enhancing learning and memory performance. Plays a role in mammalian pain signaling (long-lasting hypersensitivity). The chain is Epidermal growth factor receptor from Mus musculus (Mouse).